Reading from the N-terminus, the 159-residue chain is SsrA-binding protein (159 aa).

This sequence belongs to the SmpB family.

The protein localises to the cytoplasm. In terms of biological role, required for rescue of stalled ribosomes mediated by trans-translation. Binds to transfer-messenger RNA (tmRNA), required for stable association of tmRNA with ribosomes. tmRNA and SmpB together mimic tRNA shape, replacing the anticodon stem-loop with SmpB. tmRNA is encoded by the ssrA gene; the 2 termini fold to resemble tRNA(Ala) and it encodes a 'tag peptide', a short internal open reading frame. During trans-translation Ala-aminoacylated tmRNA acts like a tRNA, entering the A-site of stalled ribosomes, displacing the stalled mRNA. The ribosome then switches to translate the ORF on the tmRNA; the nascent peptide is terminated with the 'tag peptide' encoded by the tmRNA and targeted for degradation. The ribosome is freed to recommence translation, which seems to be the essential function of trans-translation. The chain is SsrA-binding protein from Coxiella burnetii (strain RSA 331 / Henzerling II).